A 307-amino-acid chain; its full sequence is Cytochrome f (307 aa).

The N-terminal stretch at 1 to 24 is a signal peptide; the sequence is MKKNLFLVSVFASLFVGTANNALA. Residues Tyr-25, Cys-45, Cys-48, and His-49 each contribute to the heme site. Residues 273–293 traverse the membrane as a helical segment; sequence LQGLVIFLGFVLIAQVFLVLK.

Belongs to the cytochrome f family. In terms of assembly, the 4 large subunits of the cytochrome b6-f complex are cytochrome b6, subunit IV (17 kDa polypeptide, petD), cytochrome f and the Rieske protein, while the 4 small subunits are PetG, PetL, PetM and PetN. The complex functions as a dimer. Requires heme as cofactor.

The protein resides in the plastid. The protein localises to the chloroplast thylakoid membrane. Its function is as follows. Component of the cytochrome b6-f complex, which mediates electron transfer between photosystem II (PSII) and photosystem I (PSI), cyclic electron flow around PSI, and state transitions. This Ostreococcus tauri protein is Cytochrome f.